A 355-amino-acid polypeptide reads, in one-letter code: Fructose-1,6-bisphosphatase class 1 (355 aa).

Glu-90, Asp-109, Leu-111, and Asp-112 together coordinate Mg(2+). Residues 112–115 (DGSS), Asn-204, and 256–258 (YLY) contribute to the substrate site. Glu-276 is a Mg(2+) binding site.

The protein belongs to the FBPase class 1 family. In terms of assembly, homotetramer. It depends on Mg(2+) as a cofactor.

It localises to the cytoplasm. It carries out the reaction beta-D-fructose 1,6-bisphosphate + H2O = beta-D-fructose 6-phosphate + phosphate. Its pathway is carbohydrate biosynthesis; gluconeogenesis. The protein is Fructose-1,6-bisphosphatase class 1 of Acidiphilium cryptum (strain JF-5).